A 289-amino-acid chain; its full sequence is ATP synthase subunit a (289 aa).

6 helical membrane passes run 43–63, 104–124, 160–180, 193–213, 232–252, and 259–279; these read AFHLDTLGWSVALGLIFVLIF, IAPLALTIFVWVFLMNAVDLI, LSVFALIIFYSIKVKGIGGFI, IFVQALLIPVNFLLEFVTLIA, VFILIAVMFGSGLLWLSGLGV, and AVFHILIITLQAFIFMMLTIV.

This sequence belongs to the ATPase A chain family. As to quaternary structure, F-type ATPases have 2 components, CF(1) - the catalytic core - and CF(0) - the membrane proton channel. CF(1) has five subunits: alpha(3), beta(3), gamma(1), delta(1), epsilon(1). CF(0) has three main subunits: a(1), b(2) and c(9-12). The alpha and beta chains form an alternating ring which encloses part of the gamma chain. CF(1) is attached to CF(0) by a central stalk formed by the gamma and epsilon chains, while a peripheral stalk is formed by the delta and b chains.

Its subcellular location is the cell inner membrane. Its function is as follows. Key component of the proton channel; it plays a direct role in the translocation of protons across the membrane. This Pseudomonas fluorescens (strain SBW25) protein is ATP synthase subunit a.